The following is a 376-amino-acid chain: Pre-mRNA-splicing factor cwf25 (376 aa).

A coiled-coil region spans residues 25-60; sequence KDEQAHKEEMKRVEQLRREIEEERQLLELHRLQEAA. Disordered stretches follow at residues 153–211 and 258–289; these read LMEK…DRNN and RTSR…ITQR. Positions 154-167 are enriched in basic and acidic residues; sequence MEKRKYSLDSDRKS. Residues 168-178 show a composition bias toward basic residues; sequence KERRHRDRHHR. Residues 179–199 are compositionally biased toward basic and acidic residues; the sequence is SNQDRSRERSDNEQHSSDKRE. Phosphoserine is present on residues S266 and S268. Residues 286-334 are a coiled coil; that stretch reads ITQRHTDIESRLQKMQDNAKELDESRRKKIELLEKKERDEEQFLEKERR.

Belongs to the CWC25 family. As to quaternary structure, belongs to the 40S cdc5-associated complex (or cwf complex), a spliceosome sub-complex reminiscent of a late-stage spliceosome composed of the U2, U5 and U6 snRNAs and at least brr2, cdc5, cwf2/prp3, cwf3/syf1, cwf4/syf3, cwf5/ecm2, spp42/cwf6, cwf7/spf27, cwf8, cwf9, cwf10, cwf11, cwf12, prp45/cwf13, cwf14, cwf15, cwf16, cwf17, cwf18, cwf19, cwf20, cwf21, cwf22, cwf23, cwf24, cwf25, cwf26, cyp7/cwf27, cwf28, cwf29/ist3, lea1, msl1, prp5/cwf1, prp10, prp12/sap130, prp17, prp22, sap61, sap62, sap114, sap145, slu7, smb1, smd1, smd3, smf1, smg1 and syf2.

It localises to the nucleus. Its function is as follows. Involved in mRNA splicing. The polypeptide is Pre-mRNA-splicing factor cwf25 (cwf25) (Schizosaccharomyces pombe (strain 972 / ATCC 24843) (Fission yeast)).